Reading from the N-terminus, the 262-residue chain is Hydroxyethylthiazole kinase (262 aa).

Met-50 is a binding site for substrate. The ATP site is built by Arg-125 and Thr-171. Gly-198 provides a ligand contact to substrate.

This sequence belongs to the Thz kinase family. Mg(2+) is required as a cofactor.

The enzyme catalyses 5-(2-hydroxyethyl)-4-methylthiazole + ATP = 4-methyl-5-(2-phosphooxyethyl)-thiazole + ADP + H(+). It participates in cofactor biosynthesis; thiamine diphosphate biosynthesis; 4-methyl-5-(2-phosphoethyl)-thiazole from 5-(2-hydroxyethyl)-4-methylthiazole: step 1/1. Its function is as follows. Catalyzes the phosphorylation of the hydroxyl group of 4-methyl-5-beta-hydroxyethylthiazole (THZ). This chain is Hydroxyethylthiazole kinase, found in Escherichia coli O81 (strain ED1a).